A 305-amino-acid chain; its full sequence is Probable branched-chain-amino-acid aminotransferase (305 aa).

The residue at position 156 (Lys156) is an N6-(pyridoxal phosphate)lysine.

The protein belongs to the class-IV pyridoxal-phosphate-dependent aminotransferase family. Requires pyridoxal 5'-phosphate as cofactor.

The enzyme catalyses L-leucine + 2-oxoglutarate = 4-methyl-2-oxopentanoate + L-glutamate. It catalyses the reaction L-isoleucine + 2-oxoglutarate = (S)-3-methyl-2-oxopentanoate + L-glutamate. The catalysed reaction is L-valine + 2-oxoglutarate = 3-methyl-2-oxobutanoate + L-glutamate. The protein operates within amino-acid biosynthesis; L-isoleucine biosynthesis; L-isoleucine from 2-oxobutanoate: step 4/4. Its pathway is amino-acid biosynthesis; L-leucine biosynthesis; L-leucine from 3-methyl-2-oxobutanoate: step 4/4. It participates in amino-acid biosynthesis; L-valine biosynthesis; L-valine from pyruvate: step 4/4. Functionally, acts on leucine, isoleucine and valine. In Synechocystis sp. (strain ATCC 27184 / PCC 6803 / Kazusa), this protein is Probable branched-chain-amino-acid aminotransferase (ilvE).